The primary structure comprises 467 residues: ATP-dependent protease ATPase subunit HslU (467 aa).

ATP-binding positions include Val-22 and 64–69; that span reads GVGKTE. Residues 149–192 form a disordered region; sequence QTNNPLESLFGGAIPNFGQNNEDEEEPPTEEIKTKRSEIKRQLE. The span at 178–192 shows a compositional bias: basic and acidic residues; sequence EEIKTKRSEIKRQLE. Residues Asp-280, Glu-345, and Arg-417 each coordinate ATP.

This sequence belongs to the ClpX chaperone family. HslU subfamily. As to quaternary structure, a double ring-shaped homohexamer of HslV is capped on each side by a ring-shaped HslU homohexamer. The assembly of the HslU/HslV complex is dependent on binding of ATP.

Its subcellular location is the cytoplasm. Its function is as follows. ATPase subunit of a proteasome-like degradation complex; this subunit has chaperone activity. The binding of ATP and its subsequent hydrolysis by HslU are essential for unfolding of protein substrates subsequently hydrolyzed by HslV. HslU recognizes the N-terminal part of its protein substrates and unfolds these before they are guided to HslV for hydrolysis. This Staphylococcus aureus (strain bovine RF122 / ET3-1) protein is ATP-dependent protease ATPase subunit HslU.